The primary structure comprises 339 residues: Phenylalanine--tRNA ligase alpha subunit (339 aa).

Glu250 contributes to the Mg(2+) binding site.

The protein belongs to the class-II aminoacyl-tRNA synthetase family. Phe-tRNA synthetase alpha subunit type 1 subfamily. Tetramer of two alpha and two beta subunits. Mg(2+) serves as cofactor.

It is found in the cytoplasm. The catalysed reaction is tRNA(Phe) + L-phenylalanine + ATP = L-phenylalanyl-tRNA(Phe) + AMP + diphosphate + H(+). The sequence is that of Phenylalanine--tRNA ligase alpha subunit from Parabacteroides distasonis (strain ATCC 8503 / DSM 20701 / CIP 104284 / JCM 5825 / NCTC 11152).